Reading from the N-terminus, the 41-residue chain is Large ribosomal subunit protein bL36 (41 aa).

The protein belongs to the bacterial ribosomal protein bL36 family.

This is Large ribosomal subunit protein bL36 from Pelagibacter ubique (strain HTCC1062).